A 362-amino-acid polypeptide reads, in one-letter code: Transcriptional repressor PifC (362 aa).

Transcription repression of its own gene by binding to the PIF operator (pifO) and replication initiation from the primary origin (ori-1). Transcriptional repressor of the pifA and pifB. The polypeptide is Transcriptional repressor PifC (pifC) (Escherichia coli (strain K12)).